A 100-amino-acid polypeptide reads, in one-letter code: Urease subunit gamma (100 aa).

This sequence belongs to the urease gamma subunit family. As to quaternary structure, heterotrimer of UreA (gamma), UreB (beta) and UreC (alpha) subunits. Three heterotrimers associate to form the active enzyme.

It is found in the cytoplasm. It catalyses the reaction urea + 2 H2O + H(+) = hydrogencarbonate + 2 NH4(+). It participates in nitrogen metabolism; urea degradation; CO(2) and NH(3) from urea (urease route): step 1/1. The sequence is that of Urease subunit gamma from Rhodopseudomonas palustris (strain BisA53).